We begin with the raw amino-acid sequence, 102 residues long: Urease subunit beta (102 aa).

This sequence belongs to the urease beta subunit family. As to quaternary structure, heterotrimer of UreA (gamma), UreB (beta) and UreC (alpha) subunits. Three heterotrimers associate to form the active enzyme.

Its subcellular location is the cytoplasm. It catalyses the reaction urea + 2 H2O + H(+) = hydrogencarbonate + 2 NH4(+). The protein operates within nitrogen metabolism; urea degradation; CO(2) and NH(3) from urea (urease route): step 1/1. This chain is Urease subunit beta, found in Clostridium perfringens.